A 527-amino-acid chain; its full sequence is Tetanolysin (527 aa).

The signal sequence occupies residues 1-32; that stretch reads MNKNVLKFVSRSLLIFSMTGLISNYNSSNVLA. 4 beta stranded membrane passes run 215-228, 235-244, 313-322, and 330-342; these read QSQL…NFKA, IDFDSIFKGE, SSHVKAAFKA, and SSNA…LNQS. Residues 484 to 494 carry the Conserved undecapeptide motif; the sequence is ECTGLAWEWWR. A Cholesterol binding motif is present at residues 516-517; it reads TL.

The protein belongs to the cholesterol-dependent cytolysin family. Homooligomeric pore complex containing 35-50 subunits; when inserted in the host membrane. In terms of processing, purified 48 and 53 kDa proteins with 4 different pIs (6.1, 5.6, 5.3 and 6.6) in decreasing order of activity.

The protein localises to the secreted. It is found in the host cell membrane. With respect to regulation, cytolysis of host cells is inhibited by cholesterol. Functionally, a cholesterol-dependent toxin that causes cytolysis by forming pores in cholesterol-containing host membranes. After binding to target membranes, the protein undergoes a major conformation change, leading to its insertion in the host membrane and formation of an oligomeric pore complex. Cholesterol is required for binding to host membranes, membrane insertion and pore formation; cholesterol binding is mediated by a Thr-Leu pair in the C-terminus. The sequence is that of Tetanolysin from Clostridium tetani (strain Massachusetts / E88).